A 310-amino-acid chain; its full sequence is GPN-loop GTPase 2 (310 aa).

Ala2 carries the N-acetylalanine modification. 19-24 (GSGKTT) lines the GTP pocket. Residues 76–78 (GPN) carry the Gly-Pro-Asn (GPN)-loop; involved in dimer interface motif. 178–181 (SKMD) is a GTP binding site.

Belongs to the GPN-loop GTPase family. In terms of assembly, heterodimers with GPN1 or GPN3. Binds to RNA polymerase II (RNAPII).

Functionally, small GTPase required for proper localization of RNA polymerase II and III (RNAPII and RNAPIII). May act at an RNAP assembly step prior to nuclear import. This chain is GPN-loop GTPase 2, found in Homo sapiens (Human).